Here is an 82-residue protein sequence, read N- to C-terminus: Small ribosomal subunit protein uS17c (82 aa).

The protein belongs to the universal ribosomal protein uS17 family. Part of the 30S ribosomal subunit.

It is found in the plastid. The protein resides in the chloroplast. In terms of biological role, one of the primary rRNA binding proteins, it binds specifically to the 5'-end of 16S ribosomal RNA. This chain is Small ribosomal subunit protein uS17c (rps17), found in Emiliania huxleyi (Coccolithophore).